The following is a 35-amino-acid chain: Potassium channel toxin alpha-KTx 6.15 (35 aa).

Disulfide bonds link Cys-3/Cys-24, Cys-9/Cys-29, Cys-13/Cys-31, and Cys-19/Cys-34.

It belongs to the short scorpion toxin superfamily. Potassium channel inhibitor family. Alpha-KTx 06 subfamily. As to expression, expressed by the venom gland.

It localises to the secreted. Blocks voltage-gated potassium channels rKv1.1/KCNA1 (IC(50)=13 nM), rKv1.2/KCNA2 (IC(50)=16 nM) and rKv1.3/KCNA3 (IC(50)=2 nM). The polypeptide is Potassium channel toxin alpha-KTx 6.15 (Hemiscorpius lepturus (Scorpion)).